Here is a 43-residue protein sequence, read N- to C-terminus: Iota-conotoxin-like Fi11.6 (43 aa).

4 disulfides stabilise this stretch: Cys-2/Cys-16, Cys-9/Cys-19, Cys-15/Cys-24, and Cys-18/Cys-35. Pro-8 bears the 4-hydroxyproline mark. Pro-26 is subject to 4-hydroxyproline. Trp-30 carries the 6'-bromotryptophan modification. D-phenylalanine is present on Phe-41.

This sequence belongs to the conotoxin I1 superfamily. In terms of tissue distribution, expressed by the venom duct.

Its subcellular location is the secreted. Its function is as follows. Iota-conotoxins bind to voltage-gated sodium channels (Nav) and act as agonists by shifting the voltage-dependence of activation to more hyperpolarized levels. Produces general excitatory symptoms. The sequence is that of Iota-conotoxin-like Fi11.6 from Conus figulinus (Fig cone).